The chain runs to 170 residues: Adenine phosphoribosyltransferase (170 aa).

The protein belongs to the purine/pyrimidine phosphoribosyltransferase family. Homodimer.

Its subcellular location is the cytoplasm. The enzyme catalyses AMP + diphosphate = 5-phospho-alpha-D-ribose 1-diphosphate + adenine. It functions in the pathway purine metabolism; AMP biosynthesis via salvage pathway; AMP from adenine: step 1/1. In terms of biological role, catalyzes a salvage reaction resulting in the formation of AMP, that is energically less costly than de novo synthesis. The protein is Adenine phosphoribosyltransferase of Brachyspira hyodysenteriae (strain ATCC 49526 / WA1).